The following is a 355-amino-acid chain: Histidinol-phosphate aminotransferase (355 aa).

K218 is modified (N6-(pyridoxal phosphate)lysine).

Belongs to the class-II pyridoxal-phosphate-dependent aminotransferase family. Histidinol-phosphate aminotransferase subfamily. In terms of assembly, homodimer. Pyridoxal 5'-phosphate is required as a cofactor.

It carries out the reaction L-histidinol phosphate + 2-oxoglutarate = 3-(imidazol-4-yl)-2-oxopropyl phosphate + L-glutamate. It functions in the pathway amino-acid biosynthesis; L-histidine biosynthesis; L-histidine from 5-phospho-alpha-D-ribose 1-diphosphate: step 7/9. This is Histidinol-phosphate aminotransferase from Chlorobaculum parvum (strain DSM 263 / NCIMB 8327) (Chlorobium vibrioforme subsp. thiosulfatophilum).